Here is a 123-residue protein sequence, read N- to C-terminus: MAVQMRTMLEVADNSGARKLQMINPLGGGAGHVAHLGDVVTAAVKEASPDGTAKKGTVVKAVIVRTHKEHRRKDGTYIRFDTNAAVLINDTGEPVGTRVFGPVARELREKKFLKIVSLAPEVL.

It belongs to the universal ribosomal protein uL14 family. As to quaternary structure, part of the 50S ribosomal subunit. Forms a cluster with proteins L3 and L19. In the 70S ribosome, L14 and L19 interact and together make contacts with the 16S rRNA in bridges B5 and B8.

Its function is as follows. Binds to 23S rRNA. Forms part of two intersubunit bridges in the 70S ribosome. The polypeptide is Large ribosomal subunit protein uL14 (Koribacter versatilis (strain Ellin345)).